The sequence spans 255 residues: Large ribosomal subunit protein uL4 (255 aa).

It belongs to the universal ribosomal protein uL4 family. In terms of assembly, part of the 50S ribosomal subunit.

Its function is as follows. One of the primary rRNA binding proteins, this protein initially binds near the 5'-end of the 23S rRNA. It is important during the early stages of 50S assembly. It makes multiple contacts with different domains of the 23S rRNA in the assembled 50S subunit and ribosome. In terms of biological role, forms part of the polypeptide exit tunnel. The polypeptide is Large ribosomal subunit protein uL4 (Pyrococcus abyssi (strain GE5 / Orsay)).